The chain runs to 339 residues: Photosystem II assembly lipoprotein Ycf48 (339 aa).

Residues 1 to 22 form the signal peptide; that stretch reads MVIVKSWQKIFALLVVLLLCIG. The N-palmitoyl cysteine moiety is linked to residue cysteine 23. Cysteine 23 is lipidated: S-diacylglycerol cysteine.

Belongs to the Ycf48 family. In terms of assembly, part of early PSII assembly complexes which includes D1 (psbA) and PsbI; not found in mature PSII. Binds to the lumenal side of PSII complexes. Interacts with YidC.

Its subcellular location is the cellular thylakoid membrane. Functionally, a factor required for optimal assembly of photosystem II (PSII), acting in the early stages of PSII assembly. Also plays a role in replacement of photodamaged D1 (psbA). Assists YidC in synthesis of chlorophyll-binding proteins. The protein is Photosystem II assembly lipoprotein Ycf48 of Trichormus variabilis (strain ATCC 29413 / PCC 7937) (Anabaena variabilis).